Here is a 406-residue protein sequence, read N- to C-terminus: Tryptophan synthase beta chain (406 aa).

Lys97 is modified (N6-(pyridoxal phosphate)lysine).

Belongs to the TrpB family. Tetramer of two alpha and two beta chains. Pyridoxal 5'-phosphate is required as a cofactor.

It carries out the reaction (1S,2R)-1-C-(indol-3-yl)glycerol 3-phosphate + L-serine = D-glyceraldehyde 3-phosphate + L-tryptophan + H2O. It participates in amino-acid biosynthesis; L-tryptophan biosynthesis; L-tryptophan from chorismate: step 5/5. Functionally, the beta subunit is responsible for the synthesis of L-tryptophan from indole and L-serine. The chain is Tryptophan synthase beta chain from Lacticaseibacillus casei (strain BL23) (Lactobacillus casei).